Reading from the N-terminus, the 238-residue chain is Ribonuclease PH (238 aa).

Residues Arg-86 and 124 to 126 (GTR) contribute to the phosphate site.

This sequence belongs to the RNase PH family. In terms of assembly, homohexameric ring arranged as a trimer of dimers.

The enzyme catalyses tRNA(n+1) + phosphate = tRNA(n) + a ribonucleoside 5'-diphosphate. In terms of biological role, phosphorolytic 3'-5' exoribonuclease that plays an important role in tRNA 3'-end maturation. Removes nucleotide residues following the 3'-CCA terminus of tRNAs; can also add nucleotides to the ends of RNA molecules by using nucleoside diphosphates as substrates, but this may not be physiologically important. Probably plays a role in initiation of 16S rRNA degradation (leading to ribosome degradation) during starvation. This Anaeromyxobacter sp. (strain Fw109-5) protein is Ribonuclease PH.